Consider the following 575-residue polypeptide: Epsin-1 (575 aa).

Residues arginine 8, lysine 11, arginine 25, asparagine 30, arginine 63, and histidine 73 each coordinate a 1,2-diacyl-sn-glycero-3-phospho-(1D-myo-inositol-4,5-bisphosphate). The 133-residue stretch at asparagine 12–arginine 144 folds into the ENTH domain. The disordered stretch occupies residues lysine 149–leucine 186. A compositionally biased stretch (low complexity) spans threonine 157–serine 167. UIM domains are found at residues glutamate 183–proline 202, glutamate 208–glutamate 227, and glycine 233–lysine 252. 2 disordered regions span residues phenylalanine 264 to proline 283 and serine 293 to leucine 575. 8 tandem repeats follow at residues aspartate 274 to tryptophan 276, aspartate 294 to tryptophan 296, aspartate 306 to tryptophan 308, aspartate 319 to tryptophan 321, aspartate 332 to tryptophan 334, aspartate 349 to tryptophan 351, aspartate 367 to tryptophan 369, and aspartate 377 to tryptophan 379. The tract at residues aspartate 274 to tryptophan 379 is 8 X 3 AA repeats of D-P-W. Low complexity predominate over residues aspartate 306 to alanine 316. Low complexity predominate over residues proline 333–proline 346. Positions aspartate 367–tryptophan 379 are enriched in low complexity. Residue serine 382 is modified to Phosphoserine. A [DE]-X(1,2)-F-X-X-[FL]-X-X-X-R motif motif is present at residues aspartate 401 to arginine 410. Residues serine 418 and serine 419 each carry the phosphoserine modification. At threonine 420 the chain carries Phosphothreonine. Residues serine 434, serine 446, and serine 453 each carry the phosphoserine modification. The segment covering serine 453 to arginine 467 has biased composition (pro residues). Residues threonine 459, threonine 463, and threonine 469 each carry the phosphothreonine modification. The residue at position 472 (serine 472) is a Phosphoserine. Phosphothreonine is present on threonine 493. 2 tandem repeats follow at residues asparagine 501–phenylalanine 503 and asparagine 517–phenylalanine 519. The tract at residues asparagine 501–phenylalanine 573 is 3 X 3 AA repeats of N-P-F. Arginine 533 is modified (omega-N-methylarginine). Over residues glycine 556–asparagine 569 the composition is skewed to pro residues. Repeat 3 spans residues asparagine 571–phenylalanine 573.

Belongs to the epsin family. Monomer. Binds ITSN1. Binds clathrin, ZBTB16/ZNF145, AP2A1 and AP2A2. Binds ubiquitinated proteins. Interacts with RALBP1 in a complex also containing NUMB and TFAP2A during interphase and mitosis. Interacts with AP2B1. Interacts with UBQLN2. Interacts with REPS2; the interaction is direct. Interacts with EPS15; the interaction is direct. Interacts with ENTREP1. Post-translationally, ubiquitinated. In terms of processing, phosphorylated on serine and/or threonine residues in mitotic cells. Phosphorylation reduces interaction with REPS2, AP-2 and the membrane fraction. Depolarization of synaptosomes results in dephosphorylation. Ubiquitously expressed. Detected in liver, spleen and testis, and weakly in lung and thymus (at protein level).

Its subcellular location is the cytoplasm. The protein resides in the cell membrane. It is found in the nucleus. It localises to the membrane. The protein localises to the clathrin-coated pit. In terms of biological role, binds to membranes enriched in phosphatidylinositol 4,5-bisphosphate (PtdIns(4,5)P2). Modifies membrane curvature and facilitates the formation of clathrin-coated invaginations. Regulates receptor-mediated endocytosis. The chain is Epsin-1 (Epn1) from Rattus norvegicus (Rat).